Consider the following 477-residue polypeptide: Argininosuccinate lyase (477 aa).

Belongs to the lyase 1 family. Argininosuccinate lyase subfamily.

The protein localises to the cytoplasm. It carries out the reaction 2-(N(omega)-L-arginino)succinate = fumarate + L-arginine. The protein operates within amino-acid biosynthesis; L-arginine biosynthesis; L-arginine from L-ornithine and carbamoyl phosphate: step 3/3. In Corynebacterium diphtheriae (strain ATCC 700971 / NCTC 13129 / Biotype gravis), this protein is Argininosuccinate lyase.